Consider the following 304-residue polypeptide: uncharacterized protein (304 aa).

A signal peptide spans 1–15 (MTRPRPPLGPAMAGA). In terms of domain architecture, Thioredoxin spans 28-151 (NAAASTDADR…LSRWVDSLLS (124 aa)).

This is an uncharacterized protein from Mycobacterium bovis (strain ATCC BAA-935 / AF2122/97).